An 874-amino-acid chain; its full sequence is Alanine--tRNA ligase (874 aa).

Residues H563, H567, C665, and H669 each contribute to the Zn(2+) site.

It belongs to the class-II aminoacyl-tRNA synthetase family. Zn(2+) serves as cofactor.

Its subcellular location is the cytoplasm. It catalyses the reaction tRNA(Ala) + L-alanine + ATP = L-alanyl-tRNA(Ala) + AMP + diphosphate. Catalyzes the attachment of alanine to tRNA(Ala) in a two-step reaction: alanine is first activated by ATP to form Ala-AMP and then transferred to the acceptor end of tRNA(Ala). Also edits incorrectly charged Ser-tRNA(Ala) and Gly-tRNA(Ala) via its editing domain. In Aeromonas salmonicida (strain A449), this protein is Alanine--tRNA ligase.